We begin with the raw amino-acid sequence, 271 residues long: p-hydroxybenzoate hydroxylase transcriptional activator (271 aa).

Positions 23–83 (IAGLAKGLAL…TDEHYFWLTH (61 aa)) constitute an HTH iclR-type domain. The H-T-H motif DNA-binding region spans 45 to 64 (VTQVAERTGISRTAARRYLK). Positions 98 to 271 (LPKVAQSFLN…NTANELRNLV (174 aa)) constitute an IclR-ED domain.

Functionally, positive regulator of the pobA gene for p-hydroxybenzoate hydroxylase. The protein is p-hydroxybenzoate hydroxylase transcriptional activator (pobR) of Acinetobacter baylyi (strain ATCC 33305 / BD413 / ADP1).